A 109-amino-acid polypeptide reads, in one-letter code: Meiotically up-regulated gene 153 protein (109 aa).

It localises to the mitochondrion. Has a role in meiosis. In Schizosaccharomyces pombe (strain 972 / ATCC 24843) (Fission yeast), this protein is Meiotically up-regulated gene 153 protein (mug153).